Reading from the N-terminus, the 851-residue chain is Protein BCK2 (851 aa).

Residues 1–10 (MPKNSHHHRS) are compositionally biased toward basic residues. Disordered regions lie at residues 1–91 (MPKN…RKKS), 233–271 (EVVP…MNTK), 315–355 (SLSL…LPEE), 466–504 (FLDG…YITT), and 698–722 (HASR…PNNV). Over residues 11–23 (SSVNSTKSRSTES) the composition is skewed to low complexity. A compositionally biased stretch (polar residues) spans 37 to 66 (ASGSTQASPDRNSSTGSCSTPVLPTMNVMS). Residues 71–81 (VLLEDPRDNHT) are compositionally biased toward basic and acidic residues. Polar residues-rich tracts occupy residues 254 to 271 (SETN…MNTK), 334 to 349 (SPRT…SQSK), 489 to 504 (ISDA…YITT), and 702 to 722 (SESN…PNNV). S334 is subject to Phosphoserine. S757 and S761 each carry phosphoserine.

In terms of biological role, dosage dependent suppressor of PKC1 deletion and MPK1 deletion. Involved in cell lysis. This chain is Protein BCK2 (BCK2), found in Saccharomyces cerevisiae (strain ATCC 204508 / S288c) (Baker's yeast).